Here is a 406-residue protein sequence, read N- to C-terminus: UPF0754 membrane protein CYA_0973 (406 aa).

2 consecutive transmembrane segments (helical) span residues M1 to N21 and I385 to L405.

Belongs to the UPF0754 family.

It is found in the cell inner membrane. This Synechococcus sp. (strain JA-3-3Ab) (Cyanobacteria bacterium Yellowstone A-Prime) protein is UPF0754 membrane protein CYA_0973.